The sequence spans 359 residues: Trans-enoyl reductase RAP1 (359 aa).

49–52 (CDFK) contacts NADP(+). Substrate is bound at residue 137 to 144 (TCIATACM). NADP(+)-binding positions include 195–198 (SPKN), Tyr213, and 260–261 (LE). 281-285 (GQMIL) contacts substrate. 350 to 351 (VA) provides a ligand contact to NADP(+).

It belongs to the zinc-containing alcohol dehydrogenase family. Monomer.

The protein operates within secondary metabolite biosynthesis. Its function is as follows. Trans-enoyl reductase; part of the gene cluster that mediates the biosynthesis of a tyrosine-derived cytochalasan acting as a fungal signal recognized by resistant rice plants and leads to avirulence in Pi33 resistant rice cultivars. The first step in the pathway is catalyzed by the hybrid PKS-NRPS ACE1, assisted by the enoyl reductase RAP1, that are responsible for fusion of the tyrosine precursor and the polyketide backbone. The polyketide synthase module (PKS) of ACE1 is responsible for the synthesis of the polyketide backbone and the downstream nonribosomal peptide synthetase (NRPS) amidates the carboxyl end of the polyketide with the tyrosine precursor. Because ACE1 lacks a designated enoylreductase (ER) domain, the required activity is provided the enoyl reductase RAP1. Reduction by the hydrolyase ORFZ, followed by dehydration and intra-molecular Diels-Alder cyclization by the Diels-Alderase ORF3 then yield the required isoindolone-fused macrocycle. A number of oxidative steps catalyzed by the tailoring enzymes identified within the cluster, including cytochrome P450 monooxygenases CYP1 to CYP4, the FAD-linked oxidoreductase OXR2 and the short-chain dehydrogenase/reductase OXR1, are further required to afford the final cytochalasans that confer avirulence and which have still to be identified. The monooxygenase CYP1 has been shown to be a site-selective C-18 hydroxylase whereas the function of CYP3 is the site-selective epoxidation of the C-6/C-7 olefin that is present in some intermediate compounds. Finally, SYN2 and RAP2 are not required for avirulence in Pi33 resistant rice cultivars. The chain is Trans-enoyl reductase RAP1 from Pyricularia oryzae (strain 70-15 / ATCC MYA-4617 / FGSC 8958) (Rice blast fungus).